The following is a 2629-amino-acid chain: Protein DOP1 homolog (2629 aa).

Disordered stretches follow at residues 561-584 (NKGV…SRLN), 605-652 (SASN…TPRS), 688-710 (AGNV…PQFY), 1278-1340 (MDES…SSSA), 1371-1395 (TYRL…QTEH), 1435-1471 (ISKT…ATDS), and 1766-1785 (RQDT…SPTR). Polar residues-rich tracts occupy residues 605 to 615 (SASNQSVGRQS) and 636 to 647 (ASDTGQQSSSDL). Over residues 1307-1320 (DITDNSDSSDFESD) the composition is skewed to acidic residues. Positions 1321–1333 (SELRETSLEKEDS) are enriched in basic and acidic residues. Polar residues-rich tracts occupy residues 1381-1391 (GENSLNSVATD) and 1435-1450 (ISKT…SCSQ).

Belongs to the DOP1 family.

The protein resides in the golgi apparatus membrane. May be involved in protein traffic between late Golgi and early endosomes. The sequence is that of Protein DOP1 homolog from Drosophila pseudoobscura pseudoobscura (Fruit fly).